A 611-amino-acid polypeptide reads, in one-letter code: Probable potassium transport system protein Kup 1 (611 aa).

The next 12 helical transmembrane spans lie at 6–26 (LMVGALGVVYGDIGTSPLYTM), 44–64 (MLSLIVWTLLITTSIKYVAVV), 90–110 (LGVIAMGLIGAALLYGDGAIT), 129–149 (ISPYIVTLSAIILVGLFALQA), 158–178 (LFGPVMIAWFIVIGILGLFGI), 193–213 (GLSYLFSHGMTGFLVLGAVFL), 237–257 (WYGLVLPCLILNYAGQTAVVV), 280–300 (LVALATVATIIASQAIISGAF), 328–348 (IYIGFVNWTLMALTLGLTLGF), 354–374 (LAAAFGIAVSLTMLLTSILMF), 385–405 (LAASLLTAGLFVVVDMSFVSA), and 410–430 (VLEGGWFPLVVAAVIFFLMMT).

It belongs to the HAK/KUP transporter (TC 2.A.72) family.

Its subcellular location is the cell inner membrane. The enzyme catalyses K(+)(in) + H(+)(in) = K(+)(out) + H(+)(out). Functionally, transport of potassium into the cell. Likely operates as a K(+):H(+) symporter. This is Probable potassium transport system protein Kup 1 from Bradyrhizobium sp. (strain BTAi1 / ATCC BAA-1182).